A 317-amino-acid chain; its full sequence is Lysosomal-associated transmembrane protein 4B (317 aa).

The tract at residues 25–73 (AFGAKGTDPAEARSSRGIEEAGPRAHGRAGREPERRRSRQQRRGGLQAR) is disordered. Basic and acidic residues predominate over residues 32–59 (DPAEARSSRGIEEAGPRAHGRAGREPER). 4 consecutive transmembrane segments (helical) span residues 117–137 (ILLGVWYLIINAVVLLILLSA), 163–183 (MCIAIAISLLMILICAMATYG), 191–211 (WIIPFFCYQIFDFALNMLVAI), and 244–264 (CLVLIILLFISIILTFKGYLI). Positions 205-221 (LNMLVAITVLIYPNSIQ) are required for NEDD4 interaction.

The protein belongs to the LAPTM4/LAPTM5 transporter family. As to quaternary structure, homooligomer; upon reaching the lysosomes. Interacts with MCOLN1. Interacts with NEDD4; may play a role in the lysosomal sorting of LAPTM4B; enhances HGS association with NEDD4; mediates inhibition of EGFR degradation. Interacts with PIP5K1C; promotes SNX5 association with LAPTM4B; kinase activity of PIP5K1C is required; interaction is regulated by phosphatidylinositol 4,5-bisphosphate generated by PIP5K1C. Interacts with HGS; promotes HGS ubiquitination. Interacts with SNX5. Interacts with SLC3A2 and SLC7A5; recruits SLC3A2 and SLC7A5 to lysosomes to promote leucine uptake into these organelles and is required for mTORC1 activation. Interacts with LRRC32; decreases TGFB1 production in regulatory T cells. Interacts with BECN1; competes with EGFR for LAPTM4B binding; regulates EGFR activity. Interacts with EGFR; positively correlates with EGFR activation. Post-translationally, undergoes proteolytic cleavage following delivery to the lysosomes. In terms of processing, ubiquitinated by NEDD4.

It is found in the endomembrane system. It localises to the late endosome membrane. The protein resides in the cell membrane. Its subcellular location is the cell projection. The protein localises to the lysosome membrane. It is found in the endosome membrane. It localises to the endosome. The protein resides in the multivesicular body membrane. Its subcellular location is the multivesicular body lumen. In terms of biological role, required for optimal lysosomal function. Blocks EGF-stimulated EGFR intraluminal sorting and degradation. Conversely by binding with the phosphatidylinositol 4,5-bisphosphate, regulates its PIP5K1C interaction, inhibits HGS ubiquitination and relieves LAPTM4B inhibition of EGFR degradation. Recruits SLC3A2 and SLC7A5 (the Leu transporter) to the lysosome, promoting entry of leucine and other essential amino acid (EAA) into the lysosome, stimulating activation of proton-transporting vacuolar (V)-ATPase protein pump (V-ATPase) and hence mTORC1 activation. Plays a role as negative regulator of TGFB1 production in regulatory T cells. Binds ceramide and facilitates its exit from late endosome in order to control cell death pathways. This is Lysosomal-associated transmembrane protein 4B from Homo sapiens (Human).